Here is a 185-residue protein sequence, read N- to C-terminus: Potassium-transporting ATPase KdpC subunit (185 aa).

The helical transmembrane segment at 11-31 (LALLMTLVTGALYPLAVTGIA) threads the bilayer.

This sequence belongs to the KdpC family. As to quaternary structure, the system is composed of three essential subunits: KdpA, KdpB and KdpC.

It is found in the cell inner membrane. In terms of biological role, part of the high-affinity ATP-driven potassium transport (or Kdp) system, which catalyzes the hydrolysis of ATP coupled with the electrogenic transport of potassium into the cytoplasm. This subunit acts as a catalytic chaperone that increases the ATP-binding affinity of the ATP-hydrolyzing subunit KdpB by the formation of a transient KdpB/KdpC/ATP ternary complex. In Pseudomonas putida (strain ATCC 47054 / DSM 6125 / CFBP 8728 / NCIMB 11950 / KT2440), this protein is Potassium-transporting ATPase KdpC subunit.